A 140-amino-acid chain; its full sequence is Large ribosomal subunit protein uL14 (140 aa).

This sequence belongs to the universal ribosomal protein uL14 family.

In Drosophila melanogaster (Fruit fly), this protein is Large ribosomal subunit protein uL14 (RpL23).